A 464-amino-acid chain; its full sequence is Glutamate--tRNA ligase (464 aa).

The short motif at 9 to 19 (PSPTGYLHIGG) is the 'HIGH' region element. The short motif at 242-246 (KISKR) is the 'KMSKS' region element. Residue Lys-245 participates in ATP binding.

It belongs to the class-I aminoacyl-tRNA synthetase family. Glutamate--tRNA ligase type 1 subfamily. Monomer.

It is found in the cytoplasm. The enzyme catalyses tRNA(Glu) + L-glutamate + ATP = L-glutamyl-tRNA(Glu) + AMP + diphosphate. In terms of biological role, catalyzes the attachment of glutamate to tRNA(Glu) in a two-step reaction: glutamate is first activated by ATP to form Glu-AMP and then transferred to the acceptor end of tRNA(Glu). In Neisseria meningitidis serogroup C / serotype 2a (strain ATCC 700532 / DSM 15464 / FAM18), this protein is Glutamate--tRNA ligase.